We begin with the raw amino-acid sequence, 527 residues long: Baeyer-Villiger monooxygenase (527 aa).

FAD contacts are provided by residues Ser36, Glu56, Thr64–Val67, Asp76, Tyr82, and Ile125. Ala74 to Asp76 provides a ligand contact to NADP(+). NADP(+) contacts are provided by residues Thr199 to Gln205, Arg222 to Thr223, and Lys308 to Arg309. Met415 is an FAD binding site.

This sequence belongs to the FAD-binding monooxygenase family. FAD is required as a cofactor.

In terms of biological role, catalyzes a Baeyer-Villiger oxidation reaction, i.e. the insertion of an oxygen atom into a carbon-carbon bond adjacent to a carbonyl, which converts ketones to esters or lactones using NADPH and/or NADH as an electron donor. Thus, can convert bicyclo[3.2.0]hept-2-en-6-one into the oxidative lactone products 2-oxabicyclo[3.3.0]oct-6-en-3-one and 3-oxabicyclo[3.3.0]oct-6-en-2-one. Is also able to catalyze the sulfoxidation of methyl phenyl sulfide (thioanisole). The chain is Baeyer-Villiger monooxygenase from Pseudomonas aeruginosa (strain ATCC 15692 / DSM 22644 / CIP 104116 / JCM 14847 / LMG 12228 / 1C / PRS 101 / PAO1).